Consider the following 179-residue polypeptide: Protein GrpE (179 aa).

The segment covering 1–10 has biased composition (basic and acidic residues); sequence MSKKEEKQEE. The tract at residues 1-23 is disordered; the sequence is MSKKEEKQEELQEEMEAVDAAGV.

This sequence belongs to the GrpE family. In terms of assembly, homodimer.

Its subcellular location is the cytoplasm. Participates actively in the response to hyperosmotic and heat shock by preventing the aggregation of stress-denatured proteins, in association with DnaK and GrpE. It is the nucleotide exchange factor for DnaK and may function as a thermosensor. Unfolded proteins bind initially to DnaJ; upon interaction with the DnaJ-bound protein, DnaK hydrolyzes its bound ATP, resulting in the formation of a stable complex. GrpE releases ADP from DnaK; ATP binding to DnaK triggers the release of the substrate protein, thus completing the reaction cycle. Several rounds of ATP-dependent interactions between DnaJ, DnaK and GrpE are required for fully efficient folding. This Enterococcus faecalis (strain ATCC 700802 / V583) protein is Protein GrpE.